Here is a 77-residue protein sequence, read N- to C-terminus: U8-lycotoxin-Ls1l (77 aa).

An N-terminal signal peptide occupies residues 1-20 (MKLMIFTGLVLFAIVSLIEA). The propeptide occupies 21–26 (QAENEK).

This sequence belongs to the neurotoxin 19 (CSTX) family. 08 (U8-Lctx) subfamily. Contains 4 disulfide bonds. As to expression, expressed by the venom gland.

It localises to the secreted. This Lycosa singoriensis (Wolf spider) protein is U8-lycotoxin-Ls1l.